The primary structure comprises 351 residues: Heat-inducible transcription repressor HrcA (351 aa).

The protein belongs to the HrcA family.

Functionally, negative regulator of class I heat shock genes (grpE-dnaK-dnaJ and groELS operons). Prevents heat-shock induction of these operons. This is Heat-inducible transcription repressor HrcA from Fusobacterium nucleatum subsp. nucleatum (strain ATCC 25586 / DSM 15643 / BCRC 10681 / CIP 101130 / JCM 8532 / KCTC 2640 / LMG 13131 / VPI 4355).